A 487-amino-acid polypeptide reads, in one-letter code: uncharacterized protein (487 aa).

The first 31 residues, 1–31 (MRFHRQGISAIIGVLLIVLLGFCWKLSGSYG), serve as a signal peptide directing secretion. N-linked (GlcNAc...) asparagine glycans are attached at residues Asn40, Asn68, Asn150, Asn220, Asn304, Asn367, Asn442, and Asn448. Residues 141–176 (LERRHGRFGNGTNGDHPKGPPPPPPPPDEKGRGSQK) form a disordered region.

N-glycosylated.

This is an uncharacterized protein from Saccharomyces cerevisiae (strain ATCC 204508 / S288c) (Baker's yeast).